Reading from the N-terminus, the 1488-residue chain is Chromosome partition protein MukB (1488 aa).

34 to 41 lines the ATP pocket; sequence GGNGAGKS. Coiled-coil stretches lie at residues 326–418, 444–472, and 509–602; these read LEAD…QYNQ, LDTF…QTAH, and RHLA…QRAP. Residues 666 to 783 form a flexible hinge region; it reads PGGAEDQRLN…SLPIFGRAAR (118 aa). Coiled-coil stretches lie at residues 835–923, 977–1116, and 1209–1265; these read EAEI…AKLE, EMLS…AKAG, and VEAI…LQSV.

Belongs to the SMC family. MukB subfamily. In terms of assembly, homodimerization via its hinge domain. Binds to DNA via its C-terminal region. Interacts, and probably forms a ternary complex, with MukE and MukF via its C-terminal region. The complex formation is stimulated by calcium or magnesium. Interacts with tubulin-related protein FtsZ.

It is found in the cytoplasm. The protein resides in the nucleoid. Its function is as follows. Plays a central role in chromosome condensation, segregation and cell cycle progression. Functions as a homodimer, which is essential for chromosome partition. Involved in negative DNA supercoiling in vivo, and by this means organize and compact chromosomes. May achieve or facilitate chromosome segregation by condensation DNA from both sides of a centrally located replisome during cell division. This Salmonella paratyphi B (strain ATCC BAA-1250 / SPB7) protein is Chromosome partition protein MukB.